The chain runs to 230 residues: Demethylmenaquinone methyltransferase (230 aa).

S-adenosyl-L-methionine contacts are provided by residues T62, D80, D100–A101, and S117.

The protein belongs to the class I-like SAM-binding methyltransferase superfamily. MenG/UbiE family.

It catalyses the reaction a 2-demethylmenaquinol + S-adenosyl-L-methionine = a menaquinol + S-adenosyl-L-homocysteine + H(+). Its pathway is quinol/quinone metabolism; menaquinone biosynthesis; menaquinol from 1,4-dihydroxy-2-naphthoate: step 2/2. Methyltransferase required for the conversion of demethylmenaquinol (DMKH2) to menaquinol (MKH2). In Mycobacterium sp. (strain KMS), this protein is Demethylmenaquinone methyltransferase.